Here is a 293-residue protein sequence, read N- to C-terminus: Epimerase family protein SDR39U1 (293 aa).

Residues 31-32 (SR), 58-59 (LA), E77, R82, and V160 each bind NADP(+).

The protein belongs to the NAD(P)-dependent epimerase/dehydratase family. SDR39U1 subfamily. As to expression, expressed in adrenal gland.

Functionally, putative NADP-dependent oxidoreductase. The sequence is that of Epimerase family protein SDR39U1 (SDR39U1) from Homo sapiens (Human).